We begin with the raw amino-acid sequence, 273 residues long: Non-homologous end joining protein Ku (273 aa).

The region spanning 10–193 (AFGLVNVPVK…KVEIKPAELK (184 aa)) is the Ku domain. Positions 111-273 (FLEPDSKSSK…KANSNVPTPP (163 aa)) are sufficient for interaction with LigD.

Belongs to the prokaryotic Ku family. Homodimer. Interacts with LigD.

With LigD forms a non-homologous end joining (NHEJ) DNA repair enzyme, which repairs dsDNA breaks with reduced fidelity. Binds linear dsDNA with 5'- and 3'- overhangs but not closed circular dsDNA nor ssDNA. Recruits and stimulates the ligase activity of LigD. The polypeptide is Non-homologous end joining protein Ku (mku) (Mycobacterium tuberculosis (strain CDC 1551 / Oshkosh)).